The sequence spans 400 residues: Deoxyguanosinetriphosphate triphosphohydrolase-like protein (400 aa).

In terms of domain architecture, HD spans 73 to 215 (RLTHSIEVSQ…AAIADDIAYN (143 aa)).

It belongs to the dGTPase family. Type 2 subfamily.

The chain is Deoxyguanosinetriphosphate triphosphohydrolase-like protein from Bartonella henselae (strain ATCC 49882 / DSM 28221 / CCUG 30454 / Houston 1) (Rochalimaea henselae).